The primary structure comprises 138 residues: Protein SPMIP3 (138 aa).

The polypeptide is Protein SPMIP3 (SPMIP3) (Bos taurus (Bovine)).